The primary structure comprises 289 residues: F-actin-capping protein subunit beta (289 aa).

The segment at 73–110 (RSPWSNQFDPPLEGGNQGGSGGDGEGDGGEGGAAGSIM) is disordered. Residues 87-106 (GNQGGSGGDGEGDGGEGGAA) are compositionally biased toward gly residues.

Belongs to the F-actin-capping protein beta subunit family. As to quaternary structure, component of the F-actin capping complex, composed of a heterodimer of an alpha and a beta subunit.

It localises to the cytoplasm. It is found in the cytoskeleton. The protein localises to the actin patch. Its function is as follows. F-actin-capping proteins bind in a Ca(2+)-independent manner to the fast growing ends of actin filaments (barbed end) thereby blocking the exchange of subunits at these ends. Unlike other capping proteins (such as gelsolin and severin), these proteins do not sever actin filaments. The sequence is that of F-actin-capping protein subunit beta (fac-2) from Neurospora crassa (strain ATCC 24698 / 74-OR23-1A / CBS 708.71 / DSM 1257 / FGSC 987).